An 87-amino-acid polypeptide reads, in one-letter code: UPF0367 protein SynRCC307_0258 (87 aa).

The protein belongs to the UPF0367 family.

This chain is UPF0367 protein SynRCC307_0258, found in Synechococcus sp. (strain RCC307).